The primary structure comprises 887 residues: DNA mismatch repair protein MutS (887 aa).

626-633 provides a ligand contact to ATP; it reads GPNMAGKS.

This sequence belongs to the DNA mismatch repair MutS family.

Functionally, this protein is involved in the repair of mismatches in DNA. It is possible that it carries out the mismatch recognition step. This protein has a weak ATPase activity. The sequence is that of DNA mismatch repair protein MutS from Methanococcoides burtonii (strain DSM 6242 / NBRC 107633 / OCM 468 / ACE-M).